The sequence spans 525 residues: GMP synthase [glutamine-hydrolyzing] (525 aa).

The Glutamine amidotransferase type-1 domain maps to 9–207 (RILILDFGSQ…VRDICQCEAL (199 aa)). Cys86 acts as the Nucleophile in catalysis. Catalysis depends on residues His181 and Glu183. Residues 208-400 (WTPAKIIDDA…LGLPYNMLYR (193 aa)) form the GMPS ATP-PPase domain. 235–241 (SGGVDSS) lines the ATP pocket.

In terms of assembly, homodimer.

It carries out the reaction XMP + L-glutamine + ATP + H2O = GMP + L-glutamate + AMP + diphosphate + 2 H(+). It functions in the pathway purine metabolism; GMP biosynthesis; GMP from XMP (L-Gln route): step 1/1. Catalyzes the synthesis of GMP from XMP. The protein is GMP synthase [glutamine-hydrolyzing] of Pectobacterium carotovorum subsp. carotovorum (strain PC1).